The primary structure comprises 387 residues: 3-ketoacyl-CoA thiolase (387 aa).

Catalysis depends on Cys91, which acts as the Acyl-thioester intermediate. Catalysis depends on proton acceptor residues His343 and Cys373.

The protein belongs to the thiolase-like superfamily. Thiolase family. As to quaternary structure, heterotetramer of two alpha chains (FadB) and two beta chains (FadA).

The protein resides in the cytoplasm. It carries out the reaction an acyl-CoA + acetyl-CoA = a 3-oxoacyl-CoA + CoA. Its pathway is lipid metabolism; fatty acid beta-oxidation. Functionally, catalyzes the final step of fatty acid oxidation in which acetyl-CoA is released and the CoA ester of a fatty acid two carbons shorter is formed. This Vibrio vulnificus (strain CMCP6) protein is 3-ketoacyl-CoA thiolase.